Consider the following 359-residue polypeptide: Type-1 angiotensin II receptor A (359 aa).

Residues 1–25 (MALNSSTEDGIKRIQDDCPRAGRHS) are Extracellular-facing. N-linked (GlcNAc...) asparagine glycosylation occurs at asparagine 4. Residues glutamine 15 and aspartate 17 each coordinate angiotensin II. Disulfide bonds link cysteine 18–cysteine 274 and cysteine 101–cysteine 180. The helical transmembrane segment at 26-55 (YIFVMIPTLYSIIFVVGIFGNSLVVIVIYF) threads the bilayer. At 56–61 (YMKLKT) the chain is on the cytoplasmic side. The chain crosses the membrane as a helical span at residues 62-89 (VASVFLLNLALADLCFLLTLPLWAVYTA). Topologically, residues 90 to 98 (MEYRWPFGN) are extracellular. Residues 99–125 (HLCKIASASVSFNLYASVFLLTCLSID) form a helical membrane-spanning segment. Topologically, residues 126 to 141 (RYLAIVHPMKSRLRRT) are cytoplasmic. Residues 142-165 (MLVAKVTCIIIWLMAGLASLPAVI) traverse the membrane as a helical segment. The Extracellular segment spans residues 166-190 (HRNVYFIENTNITVCAFHYESRNST). Arginine 167 contacts angiotensin II. A glycan (N-linked (GlcNAc...) asparagine) is linked at asparagine 176. Angiotensin II is bound by residues phenylalanine 182, histidine 183, and tyrosine 184. Asparagine 188 carries N-linked (GlcNAc...) asparagine glycosylation. A helical membrane pass occupies residues 191-216 (LPIGLGLTKNILGFLFPFLIILTSYT). Lysine 199 provides a ligand contact to angiotensin II. Residues 217-239 (LIWKALKKAYEIQKNKPRNDDIF) lie on the Cytoplasmic side of the membrane. Residues 240–268 (RIIMAIVLFFFFSWVPHQIFTFLDVLIQL) traverse the membrane as a helical segment. The Extracellular segment spans residues 269-278 (GVIHDCKIAD). The chain crosses the membrane as a helical span at residues 279–304 (IVDTAMPITICIAYFNNCLNPLFYGF). Topologically, residues 305-359 (LGKKFKKYFLQLLKYIPPKAKSHSSLSTKMSTLSYRPSDNMSSAAKKPASCSEVE) are cytoplasmic. Residues 335–347 (STLSYRPSDNMSS) are compositionally biased toward polar residues. Positions 335–359 (STLSYRPSDNMSSAAKKPASCSEVE) are disordered. Cysteine 355 carries S-palmitoyl cysteine lipidation.

The protein belongs to the G-protein coupled receptor 1 family. As to quaternary structure, interacts with MAS1. Interacts with ARRB1. Interacts with FLNA (via filamin repeat 21); increases PKA-mediated phosphorylation of FLNA. C-terminal Ser or Thr residues may be phosphorylated.

The protein localises to the cell membrane. In terms of biological role, receptor for angiotensin II, a vasoconstricting peptide, which acts as a key regulator of blood pressure and sodium retention by the kidney. The activated receptor in turn couples to G-alpha proteins G(q) (GNAQ, GNA11, GNA14 or GNA15) and thus activates phospholipase C and increases the cytosolic Ca(2+) concentrations, which in turn triggers cellular responses such as stimulation of protein kinase C. The sequence is that of Type-1 angiotensin II receptor A (Agtr1a) from Mus musculus (Mouse).